The sequence spans 358 residues: Phospho-N-acetylmuramoyl-pentapeptide-transferase (358 aa).

Helical transmembrane passes span Ala-26–Asp-46, Gly-70–Trp-90, Thr-94–Val-114, Met-134–Phe-154, Glu-169–Val-189, Gly-197–Ala-217, Ala-234–Phe-254, Val-261–Ile-281, Ile-286–Val-306, and Lys-335–Leu-355.

This sequence belongs to the glycosyltransferase 4 family. MraY subfamily. The cofactor is Mg(2+).

It localises to the cell inner membrane. It catalyses the reaction UDP-N-acetyl-alpha-D-muramoyl-L-alanyl-gamma-D-glutamyl-meso-2,6-diaminopimeloyl-D-alanyl-D-alanine + di-trans,octa-cis-undecaprenyl phosphate = di-trans,octa-cis-undecaprenyl diphospho-N-acetyl-alpha-D-muramoyl-L-alanyl-D-glutamyl-meso-2,6-diaminopimeloyl-D-alanyl-D-alanine + UMP. Its pathway is cell wall biogenesis; peptidoglycan biosynthesis. Its function is as follows. Catalyzes the initial step of the lipid cycle reactions in the biosynthesis of the cell wall peptidoglycan: transfers peptidoglycan precursor phospho-MurNAc-pentapeptide from UDP-MurNAc-pentapeptide onto the lipid carrier undecaprenyl phosphate, yielding undecaprenyl-pyrophosphoryl-MurNAc-pentapeptide, known as lipid I. This is Phospho-N-acetylmuramoyl-pentapeptide-transferase from Syntrophotalea carbinolica (strain DSM 2380 / NBRC 103641 / GraBd1) (Pelobacter carbinolicus).